A 355-amino-acid polypeptide reads, in one-letter code: MSGQGKRLMVMAGGTGGHVFPGLAVAHHLMAQGWQVRWLGTADRMEADLVPKHGIEIDFIRISGLRGKGIKALIAAPLRIFNAWRQARAIMKAYKPDVVLGMGGYVSGPGGLAAWSLGIPVVLHEQNGIAGLTNKWLAKIATKVMQAFPGAFPNAEVVGNPVRIDVLALPLPQQRLAGREGPVRVLVVGGSQGARILNQTMPQVAAKLGDSVTIWHQSGKGSQQSVEQAYAEAGQPQHKVTEFIDDMAAAYAWADVVVCRSGALTVSEIAAAGLPALFVPFQHKDRQQYWNALPLEKAGAAKIIEQPQLSVDAVANTLAGWSRETLLTMAERARAASIPDATERVANEVSRAARA.

UDP-N-acetyl-alpha-D-glucosamine is bound by residues 15–17 (TGG), Asn127, Arg163, Ser191, Ile244, 263–268 (ALTVSE), and Gln288.

The protein belongs to the glycosyltransferase 28 family. MurG subfamily.

It is found in the cell inner membrane. It catalyses the reaction di-trans,octa-cis-undecaprenyl diphospho-N-acetyl-alpha-D-muramoyl-L-alanyl-D-glutamyl-meso-2,6-diaminopimeloyl-D-alanyl-D-alanine + UDP-N-acetyl-alpha-D-glucosamine = di-trans,octa-cis-undecaprenyl diphospho-[N-acetyl-alpha-D-glucosaminyl-(1-&gt;4)]-N-acetyl-alpha-D-muramoyl-L-alanyl-D-glutamyl-meso-2,6-diaminopimeloyl-D-alanyl-D-alanine + UDP + H(+). The protein operates within cell wall biogenesis; peptidoglycan biosynthesis. Its function is as follows. Cell wall formation. Catalyzes the transfer of a GlcNAc subunit on undecaprenyl-pyrophosphoryl-MurNAc-pentapeptide (lipid intermediate I) to form undecaprenyl-pyrophosphoryl-MurNAc-(pentapeptide)GlcNAc (lipid intermediate II). The polypeptide is UDP-N-acetylglucosamine--N-acetylmuramyl-(pentapeptide) pyrophosphoryl-undecaprenol N-acetylglucosamine transferase (Shigella boydii serotype 18 (strain CDC 3083-94 / BS512)).